Reading from the N-terminus, the 283-residue chain is uncharacterized protein (283 aa).

6 consecutive transmembrane segments (helical) span residues 28-48, 65-85, 113-133, 135-155, 200-220, and 246-266; these read LSST…ILLI, LTSL…GFIL, LKRG…FMIV, ILFI…IVFI, LNYI…NFVV, and IVDV…AVFA.

This sequence to M.jannaschii MJ0233.

The protein localises to the cell membrane. This is an uncharacterized protein from Methanocaldococcus jannaschii (strain ATCC 43067 / DSM 2661 / JAL-1 / JCM 10045 / NBRC 100440) (Methanococcus jannaschii).